The primary structure comprises 398 residues: Argininosuccinate synthase (398 aa).

8-16 (AYSGGLDTS) serves as a coordination point for ATP. Tyr-87 lines the L-citrulline pocket. An ATP-binding site is contributed by Gly-117. Residues Thr-119, Asn-123, and Asp-124 each contribute to the L-aspartate site. Asn-123 contributes to the L-citrulline binding site. 4 residues coordinate L-citrulline: Arg-127, Ser-175, Glu-259, and Tyr-271.

This sequence belongs to the argininosuccinate synthase family. Type 1 subfamily. As to quaternary structure, homotetramer.

It localises to the cytoplasm. It carries out the reaction L-citrulline + L-aspartate + ATP = 2-(N(omega)-L-arginino)succinate + AMP + diphosphate + H(+). Its pathway is amino-acid biosynthesis; L-arginine biosynthesis; L-arginine from L-ornithine and carbamoyl phosphate: step 2/3. The polypeptide is Argininosuccinate synthase (Corynebacterium kroppenstedtii (strain DSM 44385 / JCM 11950 / CIP 105744 / CCUG 35717)).